The chain runs to 248 residues: Stress-related protein (248 aa).

Belongs to the REF/SRPP family.

The protein is Stress-related protein (SRP) of Vitis riparia (Frost grape).